A 244-amino-acid polypeptide reads, in one-letter code: ATP synthase subunit a, chloroplastic (244 aa).

The next 5 helical transmembrane spans lie at Q35–V55, V92–L112, I131–S151, L196–L216, and G217–G237.

Belongs to the ATPase A chain family. In terms of assembly, F-type ATPases have 2 components, CF(1) - the catalytic core - and CF(0) - the membrane proton channel. CF(1) has five subunits: alpha(3), beta(3), gamma(1), delta(1), epsilon(1). CF(0) has four main subunits: a, b, b' and c.

The protein resides in the plastid. The protein localises to the chloroplast thylakoid membrane. Its function is as follows. Key component of the proton channel; it plays a direct role in the translocation of protons across the membrane. The sequence is that of ATP synthase subunit a, chloroplastic from Gossypium barbadense (Sea Island cotton).